The sequence spans 303 residues: 1-acyl-sn-glycerol-3-phosphate acyltransferase (303 aa).

The HXXXXD motif motif lies at 82 to 87; that stretch reads HQSTLD. A disordered region spans residues 278-303; sequence NEPVPSVSISNDVNTHNEGSSVKKMH. Over residues 284 to 297 the composition is skewed to polar residues; sequence VSISNDVNTHNEGS.

The protein belongs to the 1-acyl-sn-glycerol-3-phosphate acyltransferase family.

It localises to the lipid droplet. It carries out the reaction a 1-acyl-sn-glycero-3-phosphate + an acyl-CoA = a 1,2-diacyl-sn-glycero-3-phosphate + CoA. The catalysed reaction is a 1-acyl-sn-glycero-3-phosphocholine + an acyl-CoA = a 1,2-diacyl-sn-glycero-3-phosphocholine + CoA. The enzyme catalyses a 1-acyl-sn-glycero-3-phosphoethanolamine + an acyl-CoA = a 1,2-diacyl-sn-glycero-3-phosphoethanolamine + CoA. It catalyses the reaction 1-hexadecanoyl-sn-glycero-3-phosphate + (9Z)-octadecenoyl-CoA = 1-hexadecanoyl-2-(9Z-octadecenoyl)-sn-glycero-3-phosphate + CoA. It carries out the reaction 1-octadecanoyl-sn-glycero-3-phosphate + (9Z)-octadecenoyl-CoA = 1-octadecanoyl-2-(9Z-octadecenoyl)-sn-glycero-3-phosphate + CoA. The catalysed reaction is 1-(9Z-octadecenoyl)-sn-glycero-3-phospho-L-serine + (9Z)-octadecenoyl-CoA = 1,2-di-(9Z)-octadecenoyl-sn-glycero-3-phospho-L-serine + CoA. The enzyme catalyses a 1-acyl-sn-glycero-3-phospho-(1D-myo-inositol) + (9Z)-octadecenoyl-CoA = a 1-acyl-2-(9Z-octadecenoyl)-sn-glycero-3-phospho-(1D-myo-inositol) + CoA. It catalyses the reaction 1-heptadecanoyl-sn-glycero-3-phosphate + (9Z)-octadecenoyl-CoA = 1-heptadecanoyl-2-(9Z)-octadecenoyl-sn-glycero-3-phosphate + CoA. It carries out the reaction 1-heptadecanoyl-sn-glycero-3-phosphate + dodecanoyl-CoA = 1-heptadecanoyl-2-dodecanoyl-sn-glycero-3-phosphate + CoA. The catalysed reaction is 1-heptadecanoyl-sn-glycero-3-phosphate + tetradecanoyl-CoA = 1-heptadecanoyl-2-tetradecanoyl-sn-glycero-3-phosphate + CoA. The protein operates within phospholipid metabolism; CDP-diacylglycerol biosynthesis; CDP-diacylglycerol from sn-glycerol 3-phosphate: step 2/3. In terms of biological role, acyltransferase that catalyzes the sn-2-specific, acyl-CoA-dependent acylation of lysophosphatidic acid (LPA) to phosphatidic acid (PA) in lipid particles. Together with ALE1, plays a central role in PA biosynthesis. PA is the intermediate, from which all glycerophospholipids are synthesized. Can also acylate lysophosphoinositol (LPI) and lysophosphoserine (LPS). The fatty acyl substrates include 18:1-acyl-CoA, 14:0-acyl-CoA, 12:0-acyl-CoA and 10:0-acyl-CoA. This Saccharomyces cerevisiae (strain ATCC 204508 / S288c) (Baker's yeast) protein is 1-acyl-sn-glycerol-3-phosphate acyltransferase.